A 180-amino-acid polypeptide reads, in one-letter code: Bifunctional protein PyrR (180 aa).

A PRPP-binding motif is present at residues 101–113 (VILVDDVLYTGRT).

This sequence belongs to the purine/pyrimidine phosphoribosyltransferase family. PyrR subfamily. Homodimer and homohexamer; in equilibrium.

It catalyses the reaction UMP + diphosphate = 5-phospho-alpha-D-ribose 1-diphosphate + uracil. Its function is as follows. Regulates transcriptional attenuation of the pyrimidine nucleotide (pyr) operon by binding in a uridine-dependent manner to specific sites on pyr mRNA. This disrupts an antiterminator hairpin in the RNA and favors formation of a downstream transcription terminator, leading to a reduced expression of downstream genes. Functionally, also displays a weak uracil phosphoribosyltransferase activity which is not physiologically significant. This Bacillus cytotoxicus (strain DSM 22905 / CIP 110041 / 391-98 / NVH 391-98) protein is Bifunctional protein PyrR.